We begin with the raw amino-acid sequence, 156 residues long: NADH-ubiquinone oxidoreductase chain 6 (156 aa).

Transmembrane regions (helical) follow at residues 1–21 (MILT…YLAS), 24–44 (IVLG…FASF), 49–69 (FAFL…AYFL), 77–97 (ISNF…SALT), and 121–141 (STAP…VIVV).

This sequence belongs to the complex I subunit 6 family.

The protein localises to the mitochondrion membrane. It carries out the reaction a ubiquinone + NADH + 5 H(+)(in) = a ubiquinol + NAD(+) + 4 H(+)(out). In terms of biological role, core subunit of the mitochondrial membrane respiratory chain NADH dehydrogenase (Complex I) that is believed to belong to the minimal assembly required for catalysis. Complex I functions in the transfer of electrons from NADH to the respiratory chain. The immediate electron acceptor for the enzyme is believed to be ubiquinone. The protein is NADH-ubiquinone oxidoreductase chain 6 (ND6) of Lumbricus terrestris (Common earthworm).